The following is a 645-amino-acid chain: Chaperone protein DnaK (645 aa).

Threonine 201 is subject to Phosphothreonine; by autocatalysis. Residues 606–629 (NTNNATAGDNNTTDTGSSSNSDGS) are compositionally biased toward low complexity. Residues 606-645 (NTNNATAGDNNTTDTGSSSNSDGSKVVDSDYQEIDKKDGK) are disordered. Basic and acidic residues predominate over residues 630 to 645 (KVVDSDYQEIDKKDGK).

The protein belongs to the heat shock protein 70 family.

Acts as a chaperone. The sequence is that of Chaperone protein DnaK from Ehrlichia ruminantium (strain Welgevonden).